Here is a 308-residue protein sequence, read N- to C-terminus: Ribosomal RNA large subunit methyltransferase F (308 aa).

The protein belongs to the methyltransferase superfamily. METTL16/RlmF family.

It is found in the cytoplasm. The enzyme catalyses adenosine(1618) in 23S rRNA + S-adenosyl-L-methionine = N(6)-methyladenosine(1618) in 23S rRNA + S-adenosyl-L-homocysteine + H(+). Specifically methylates the adenine in position 1618 of 23S rRNA. The chain is Ribosomal RNA large subunit methyltransferase F from Escherichia fergusonii (strain ATCC 35469 / DSM 13698 / CCUG 18766 / IAM 14443 / JCM 21226 / LMG 7866 / NBRC 102419 / NCTC 12128 / CDC 0568-73).